The sequence spans 357 residues: 3'(2'),5'-bisphosphate nucleotidase (357 aa).

Asp49 functions as the Proton acceptor in the catalytic mechanism. Residues Glu72, Asp142, Ile144, and Asp145 each coordinate Mg(2+). Catalysis depends on Thr147, which acts as the Proton acceptor. Adenosine 3',5'-bisphosphate contacts are provided by Thr147, His241, Ser264, Lys267, Arg281, and Asp294. AMP contacts are provided by His241, Ser264, Lys267, Arg281, and Asp294. Residue Asp294 coordinates Mg(2+).

The protein belongs to the inositol monophosphatase superfamily. The cofactor is Mg(2+).

The protein resides in the cytoplasm. The protein localises to the nucleus. It catalyses the reaction 3'-phosphoadenylyl sulfate + H2O = adenosine 5'-phosphosulfate + phosphate. The catalysed reaction is adenosine 3',5'-bisphosphate + H2O = AMP + phosphate. It carries out the reaction adenosine 2',5'-bisphosphate + H2O = AMP + phosphate. Its activity is regulated as follows. Phosphatase activity is very sensitive to lithium and moderately sensitive to sodium. The inhibitory effects of lithium and sodium are overcome by high concentrations of potassium. Lithium exerts its inhibitory action by blocking the products of the PAP hydrolysis at the active site. Functionally, phosphatase that converts adenosine 3'-phosphate 5'-phosphosulfate (PAPS) to adenosine 5'-phosphosulfate (APS) and 3'(2')-phosphoadenosine 5'-phosphate (PAP) to AMP. May regulate the flux of sulfur in the sulfur-activation pathway by converting PAPS to APS. Involved in salt tolerance. Confers resistance to lithium. Shows no activity on inositol mono- and diphosphates, 3'-AMP, AMP, nicotinamide adenine dinucleotide phosphate (NADP), and p-nitrophenylphosphate. The chain is 3'(2'),5'-bisphosphate nucleotidase (MET22) from Saccharomyces cerevisiae (strain ATCC 204508 / S288c) (Baker's yeast).